The primary structure comprises 207 residues: MDVLGIDEAGRGSVLGPLVIAGVIVPEKMDIVLERMGVKDSKRLTPNRRTILSRKLKKMFEYDLVVISAQDIDNMRADGINLNEIERIGMEKILSNLNPEKAIVDAVDIKAERFQNKLANDTGVNVVAEHKADDNYIEVSAASIIAKQERDAHIAEINKDYIKMGGIGSGYPSDPITKKFLTNFTYDEMPDFVRKSWATVEKMKNSQ.

One can recognise an RNase H type-2 domain in the interval 1–207; that stretch reads MDVLGIDEAG…ATVEKMKNSQ (207 aa). Aspartate 7, glutamate 8, and aspartate 105 together coordinate a divalent metal cation.

Belongs to the RNase HII family. Requires Mn(2+) as cofactor. It depends on Mg(2+) as a cofactor.

It is found in the cytoplasm. It carries out the reaction Endonucleolytic cleavage to 5'-phosphomonoester.. Functionally, endonuclease that specifically degrades the RNA of RNA-DNA hybrids. In Methanobrevibacter smithii (strain ATCC 35061 / DSM 861 / OCM 144 / PS), this protein is Ribonuclease HII.